A 104-amino-acid chain; its full sequence is Large ribosomal subunit protein uL24 (104 aa).

The protein belongs to the universal ribosomal protein uL24 family. In terms of assembly, part of the 50S ribosomal subunit.

Its function is as follows. One of two assembly initiator proteins, it binds directly to the 5'-end of the 23S rRNA, where it nucleates assembly of the 50S subunit. In terms of biological role, one of the proteins that surrounds the polypeptide exit tunnel on the outside of the subunit. The polypeptide is Large ribosomal subunit protein uL24 (Enterobacter sp. (strain 638)).